The sequence spans 432 residues: Nematocyst expressed protein 3-like (432 aa).

The N-terminal stretch at 1–19 (MRVVYLVLVVAVIIAITEA) is a signal peptide. 6 disulfides stabilise this stretch: C52-C91, C59-C84, C73-C88, C125-C140, C157-C176, and C166-C180. 3 consecutive ShKT domains span residues 59 to 91 (CKAF…CKLC), 107 to 143 (VVRA…CMLC), and 149 to 183 (GPCD…CDVY). Residues 235–313 (GAQYPAATAA…PEAAPSEPEA (79 aa)) show a composition bias toward low complexity. Residues 235–432 (GAQYPAATAA…KSKSGHKRHH (198 aa)) form a disordered region. Residues 314-330 (APAPAPEMAPAPAPEMA) are compositionally biased toward pro residues. Low complexity predominate over residues 331–408 (PAPEAASAPA…AAPSEQPMPG (78 aa)). Positions 409-432 (KKSKSKPSKRKGVKKSKSGHKRHH) are enriched in basic residues.

It belongs to the NEP3 family. Nematocytes. In late planulae, transcripts are found throughout the ectoderm in nematocytes, with high concentration of expressing cells in the oral pole. In primary polyps, is expressed in nematocytes in the body wall and physa ectoderm and in the upper and lower pharynx.

The protein resides in the nematocyst. Its subcellular location is the secreted. Probable toxin. The chain is Nematocyst expressed protein 3-like from Nematostella vectensis (Starlet sea anemone).